We begin with the raw amino-acid sequence, 2426 residues long: Protein SON (2426 aa).

Ala2 is modified (N-acetylalanine). The residue at position 16 (Lys16) is an N6-acetyllysine. Residues 24-42 (LSSGRNEGQLNGETNTPIE) show a composition bias toward polar residues. The disordered stretch occupies residues 24–56 (LSSGRNEGQLNGETNTPIEGNQAGDAAASARSL). A Glycyl lysine isopeptide (Lys-Gly) (interchain with G-Cter in SUMO2) cross-link involves residue Lys64. Over residues 77–88 (LRYKPDLKEGSR) the composition is skewed to basic and acidic residues. Residues 77 to 155 (LRYKPDLKEG…GNIDLESDSF (79 aa)) are disordered. Ser94 carries the phosphoserine modification. The segment covering 106–130 (KKSKKHKKHKNKKKKKKKEKEKKYK) has biased composition (basic residues). The segment covering 131–146 (RQPEESESKTKSHDDG) has biased composition (basic and acidic residues). 5 positions are modified to phosphoserine: Ser142, Ser152, Ser154, Ser160, and Ser283. The residue at position 288 (Lys288) is an N6-acetyllysine. Positions 305 to 328 (TLVVSSETPTEVYPEPSTSTTMDF) are disordered. Phosphothreonine is present on Thr400. The disordered stretch occupies residues 406–442 (PGPSATPVPELPGPLSTPVPELPGPPATAVPELPGPS). A compositionally biased stretch (pro residues) spans 409 to 442 (SATPVPELPGPLSTPVPELPGPPATAVPELPGPS). The interval 726-895 (LASNTMDSQM…LASGTMDAQM (170 aa)) is 17 X 10 AA tandem repeats of L-A-[ST]-[NSG]-[TS]-MDSQM. The tract at residues 912–988 (DPYRLAQDPY…IAPRPYRLAP (77 aa)) is 11 X 7 AA tandem repeats of [DR]-P-Y-R-[LI][AG][QHP]. Position 950 is an omega-N-methylarginine (Arg950). Thr959 carries the post-translational modification Phosphothreonine. Position 998 is a phosphoserine (Ser998). 14 tandem repeats follow at residues 1006 to 1011 (ERSMMS), 1014 to 1019 (ERSMMS), 1021 to 1026 (ERSMMS), 1030 to 1035 (ERSMMS), 1038 to 1043 (ERSMMS), 1046 to 1051 (ERSMMS), 1055 to 1060 (ERSMMS), 1063 to 1068 (ERSMMS), 1071 to 1076 (ERSMMS), 1080 to 1085 (DRSMMS), 1089 to 1094 (DRSMMS), 1100 to 1105 (DRSMMS), 1111 to 1116 (DRSMMS), and 1121 to 1126 (DRSMMS). A 14 X 6 AA repeats of [ED]-R-S-M-M-S region spans residues 1006 to 1126 (ERSMMSSYER…SYTADRSMMS (121 aa)). Arg1007 is modified (asymmetric dimethylarginine). At Arg1022 the chain carries Asymmetric dimethylarginine. Phosphoserine is present on residues Ser1035 and Ser1043. A phosphoserine mark is found at Ser1060 and Ser1068. The residue at position 1082 (Ser1082) is a Phosphoserine. A disordered region spans residues 1144–1236 (YMVPPLPPEE…PTDYSVSASD (93 aa)). The tract at residues 1147–1179 (PPLPPEEPPTMPPLPPEEPPMTPPLPPEEPPEG) is 3 X 11 AA tandem repats of P-P-L-P-P-E-E-P-P-[TME]-[MTG]. Residues 1147–1180 (PPLPPEEPPTMPPLPPEEPPMTPPLPPEEPPEGP) show a composition bias toward pro residues. Polar residues predominate over residues 1186–1196 (QSALTAENTWP). Over residues 1198 to 1224 (EVPSSPSEESVSQPEPPVSQSEISEPS) the composition is skewed to low complexity. The segment at 1359–1390 (VLESSAVTVLESSTVTVLESSTVTVLEPSVVT) is 4 X 8 AA tandem repeats of V-L-E-SS-[AVT]-VT. A phosphoserine mark is found at Ser1556 and Ser1651. The segment at 1645–1722 (TSPSGGSEAD…KETLPDSGFS (78 aa)) is disordered. Basic and acidic residues predominate over residues 1677-1689 (KDTEEPLPVKESD). Phosphoserine is present on residues Ser1697, Ser1701, Ser1747, Ser1759, Ser1766, Ser1769, Ser1782, and Ser1783. The tract at residues 1754–2054 (GPLLASDVGR…RSPKRLTDLD (301 aa)) is disordered. Basic and acidic residues-rich tracts occupy residues 1790–1801 (YEIFVKVKDTHE), 1809–1822 (RDKG…DSSL), and 1830–1845 (KSSE…ESRS). Composition is skewed to basic residues over residues 1846–1909 (RARK…RKRS) and 1917–1948 (TVRA…RRRS). 9 repeat units span residues 1925–1931 (PSRRSRS), 1934–1952 (PSRR…FSIS), 1953–1959 (PSRRSRT), 1960–1966 (PSRRSRT), 1967–1973 (PSRRSRT), 1974–1980 (PSRRSRT), 1981–1987 (PSRRSRT), 1988–1994 (PSRRSRT), and 1995–2013 (PSRR…FSIS). The 7 X 7 AA repeats of P-S-R-R-S-R-[TS] stretch occupies residues 1925–1994 (PSRRSRSHTP…SRTPSRRSRT (70 aa)). The tract at residues 1934-2013 (PSRRRRSRSV…VVRRRSFSIS (80 aa)) is 2 X 19 AA repeats of P-S-R-R-R-R-S-R-S-V-V-R-R-R-S-F-S-I-S. A phosphoserine mark is found at Ser1948, Ser1950, and Ser1952. Positions 1955–2009 (RRSRTPSRRSRTPSRRSRTPSRRSRTPSRRSRTPSRRSRTPSRRRRSRSVVRRRS) are enriched in basic residues. A phosphoserine mark is found at Ser2009, Ser2011, Ser2013, Ser2029, and Ser2031. The interval 2013–2039 (SPVRLRRSRTPLRRRFSRSPIRRKRSR) is 3 X tandem repeats of [ST]-P-[VLI]-R-[RL]-[RK]-[RF]-S-R. The segment covering 2016–2038 (RLRRSRTPLRRRFSRSPIRRKRS) has biased composition (basic residues). Over residues 2039–2054 (RSSERGRSPKRLTDLD) the composition is skewed to basic and acidic residues. Lys2055 is subject to N6-acetyllysine; alternate. Lys2055 is covalently cross-linked (Glycyl lysine isopeptide (Lys-Gly) (interchain with G-Cter in SUMO2); alternate). Lys2092 participates in a covalent cross-link: Glycyl lysine isopeptide (Lys-Gly) (interchain with G-Cter in SUMO2). Ser2129 carries the phosphoserine modification. Residue Lys2149 forms a Glycyl lysine isopeptide (Lys-Gly) (interchain with G-Cter in SUMO2) linkage. Residue Thr2163 is modified to Phosphothreonine. A disordered region spans residues 2200–2220 (KNGEENKDDDNVFSSNLPSEP). Position 2238 is a phosphoserine (Ser2238). Residues 2305–2351 (TGGMGAVLMRKMGWREGEGLGKNKEGNKEPILVDFKTDRKGLVAVGE) enclose the G-patch domain. The 56-residue stretch at 2371 to 2426 (HPVSALMEICNKRRWQPPEFLLVHDSGPDHRKHFLFRVLRNGALTRPNCMFFLNRY) folds into the DRBM domain.

As to quaternary structure, interacts with SRSF2. Associates with the spliceosome. Interacts with the AML1-MTG8 (AML1-ETO) fusion protein, possibly leading to trigger signals inhibiting leukemogenesis. Interacts with USH1G. As to expression, widely expressed, with the higher expression seen in leukocyte and heart.

The protein localises to the nucleus speckle. In terms of biological role, RNA-binding protein that acts as a mRNA splicing cofactor by promoting efficient splicing of transcripts that possess weak splice sites. Specifically promotes splicing of many cell-cycle and DNA-repair transcripts that possess weak splice sites, such as TUBG1, KATNB1, TUBGCP2, AURKB, PCNT, AKT1, RAD23A, and FANCG. Probably acts by facilitating the interaction between Serine/arginine-rich proteins such as SRSF2 and the RNA polymerase II. Also binds to DNA; binds to the consensus DNA sequence: 5'-GA[GT]AN[CG][AG]CC-3'. May indirectly repress hepatitis B virus (HBV) core promoter activity and transcription of HBV genes and production of HBV virions. Essential for correct RNA splicing of multiple genes critical for brain development, neuronal migration and metabolism, including TUBG1, FLNA, PNKP, WDR62, PSMD3, PCK2, PFKL, IDH2, and ACY1. This chain is Protein SON (SON), found in Homo sapiens (Human).